Consider the following 152-residue polypeptide: Ubiquitin-conjugating enzyme E2 2 (152 aa).

Residues 4-150 enclose the UBC core domain; sequence PARKRLMRDF…VREVVEQSWT (147 aa). The active-site Glycyl thioester intermediate is the C88.

It belongs to the ubiquitin-conjugating enzyme family.

It catalyses the reaction S-ubiquitinyl-[E1 ubiquitin-activating enzyme]-L-cysteine + [E2 ubiquitin-conjugating enzyme]-L-cysteine = [E1 ubiquitin-activating enzyme]-L-cysteine + S-ubiquitinyl-[E2 ubiquitin-conjugating enzyme]-L-cysteine.. It functions in the pathway protein modification; protein ubiquitination. In terms of biological role, catalyzes the covalent attachment of ubiquitin to other proteins. The protein is Ubiquitin-conjugating enzyme E2 2 (UBC2) of Triticum aestivum (Wheat).